We begin with the raw amino-acid sequence, 334 residues long: Biotin synthase (334 aa).

Residues 55–280 (EEIEVEGIIS…HTMLRFAGGR (226 aa)) form the Radical SAM core domain. C70, C74, and C77 together coordinate [4Fe-4S] cluster. [2Fe-2S] cluster is bound by residues C113, C205, and R275.

This sequence belongs to the radical SAM superfamily. Biotin synthase family. Homodimer. It depends on [4Fe-4S] cluster as a cofactor. [2Fe-2S] cluster is required as a cofactor.

It catalyses the reaction (4R,5S)-dethiobiotin + (sulfur carrier)-SH + 2 reduced [2Fe-2S]-[ferredoxin] + 2 S-adenosyl-L-methionine = (sulfur carrier)-H + biotin + 2 5'-deoxyadenosine + 2 L-methionine + 2 oxidized [2Fe-2S]-[ferredoxin]. It functions in the pathway cofactor biosynthesis; biotin biosynthesis; biotin from 7,8-diaminononanoate: step 2/2. Functionally, catalyzes the conversion of dethiobiotin (DTB) to biotin by the insertion of a sulfur atom into dethiobiotin via a radical-based mechanism. This chain is Biotin synthase, found in Corynebacterium glutamicum (strain R).